We begin with the raw amino-acid sequence, 1214 residues long: Spliceosome-associated protein 130 A (1214 aa).

Positions 817–848 are disordered; that stretch reads AGGVGENGNGNADQMENGADDEDKEDPLSDEQ. Residues 834 to 845 are compositionally biased toward acidic residues; that stretch reads GADDEDKEDPLS.

Belongs to the RSE1 family. In terms of assembly, identified in the spliceosome C complex. Component of the U11/U12 snRNPs that are part of the U12-type spliceosome. Component of splicing factor SF3B complex. In terms of tissue distribution, expressed at low levels in roots, leaves, inflorescence and, to a lower extent, in siliques.

It is found in the nucleus. Functionally, subunit of the splicing factor SF3B required for 'A' complex assembly formed by the stable binding of U2 snRNP to the branchpoint sequence (BPS) in pre-mRNA. Sequence independent binding of SF3A/SF3B complex upstream of the branch site is essential, it may anchor U2 snRNP to the pre-mRNA. May also be involved in the assembly of the 'E' complex. Also belongs to the minor U12-dependent spliceosome, which is involved in the splicing of rare class of nuclear pre-mRNA intron. Required for pollen and ovule development, especially during the transition from microspore to the bicellular stage in pollen development. Involved in the accumulation of QRT1 and QRT3. The protein is Spliceosome-associated protein 130 A of Arabidopsis thaliana (Mouse-ear cress).